Consider the following 338-residue polypeptide: Aspartate-semialdehyde dehydrogenase (338 aa).

NADP(+)-binding positions include 13 to 16 (TGNV) and 41 to 42 (SS). A phosphate-binding site is contributed by arginine 101. Cysteine 132 (acyl-thioester intermediate) is an active-site residue. Position 159 (glutamine 159) interacts with substrate. Residues 162-163 (SG) and proline 187 contribute to the NADP(+) site. Lysine 216 serves as a coordination point for phosphate. Residue arginine 237 participates in substrate binding. The Proton acceptor role is filled by histidine 244. Asparagine 317 is a binding site for NADP(+).

It belongs to the aspartate-semialdehyde dehydrogenase family. Homodimer.

It catalyses the reaction L-aspartate 4-semialdehyde + phosphate + NADP(+) = 4-phospho-L-aspartate + NADPH + H(+). It functions in the pathway amino-acid biosynthesis; L-lysine biosynthesis via DAP pathway; (S)-tetrahydrodipicolinate from L-aspartate: step 2/4. Its pathway is amino-acid biosynthesis; L-methionine biosynthesis via de novo pathway; L-homoserine from L-aspartate: step 2/3. The protein operates within amino-acid biosynthesis; L-threonine biosynthesis; L-threonine from L-aspartate: step 2/5. Its function is as follows. Catalyzes the NADPH-dependent formation of L-aspartate-semialdehyde (L-ASA) by the reductive dephosphorylation of L-aspartyl-4-phosphate. The polypeptide is Aspartate-semialdehyde dehydrogenase (Rickettsia conorii (strain ATCC VR-613 / Malish 7)).